Here is a 27-residue protein sequence, read N- to C-terminus: Phospholipase A2 taicatoxin (27 aa).

It belongs to the phospholipase A2 family. Group I subfamily. As to quaternary structure, heterotrimer composed of an alpha-neurotoxin-like peptide of 8 kDa (AC P0CJ35), this neurotoxic phospholipase of 16 kDa and a serine protease inhibitor of 7 kDa (AC B7S4N9) at an approximate stoichiometry of 1:1:4; non-covalently linked. Requires Ca(2+) as cofactor. In terms of processing, contains 7 disulfide bonds. In terms of tissue distribution, expressed by the venom gland.

The protein localises to the secreted. The catalysed reaction is a 1,2-diacyl-sn-glycero-3-phosphocholine + H2O = a 1-acyl-sn-glycero-3-phosphocholine + a fatty acid + H(+). In terms of biological role, heterotrimer: blocks the voltage-dependent L-type calcium channels from the heart, and the small conductance calcium-activated potassium channels in the chromaffin cells and in the brain. Is very toxic to mice. Functionally, monomer: Snake venom phospholipase A2 (PLA2) that has neurotoxic activities. Voltage-dependently affects ionic currents in chick (Gallus domesticus) dorsal root ganglion cells. PLA2 catalyzes the calcium-dependent hydrolysis of the 2-acyl groups in 3-sn-phosphoglycerides. This chain is Phospholipase A2 taicatoxin, found in Oxyuranus scutellatus scutellatus (Australian taipan).